Here is a 263-residue protein sequence, read N- to C-terminus: Peptidoglycan-N-acetylmuramic acid deacetylase PdaA (263 aa).

Residues 1–23 form the signal peptide; it reads MKWMCSICCAAVLLAGGAAQAEA. In terms of domain architecture, NodB homology spans 66–247; the sequence is KTIYLTFDNG…DLKKQGYTFK (182 aa). Asp73 functions as the Proton acceptor in the catalytic mechanism. A divalent metal cation is bound by residues His124 and His128. Catalysis depends on His222, which acts as the Proton donor.

Belongs to the polysaccharide deacetylase family.

Catalyzes the deacetylation of N-acetylmuramic acid (MurNAc) residues in glycan strands of peptidoglycan, leading to the formation of muramic delta-lactam residues in spore cortex, after transpeptidation of deacetylated muramic acid residues. PdaA probably carries out both deacetylation and lactam ring formation and requires the product of CwlD activity on peptidoglycan as a substrate. Is required for germination. Cannot use chitin oligomer (hexa-N-acetylchitohexaose) as a substrate. The protein is Peptidoglycan-N-acetylmuramic acid deacetylase PdaA (pdaA) of Bacillus subtilis (strain 168).